The sequence spans 65 residues: uncharacterized protein (65 aa).

The interval 1 to 30 is disordered; it reads MPAASLESLLPPPPGKLPSPPLRPHGKFQR. A compositionally biased stretch (pro residues) spans 10–23; it reads LPPPPGKLPSPPLR.

This is an uncharacterized protein from Homo sapiens (Human).